Here is a 607-residue protein sequence, read N- to C-terminus: Granule-bound starch synthase 1, chloroplastic/amyloplastic (607 aa).

Residues 1 to 77 (MASITASHHF…RPGCSATIVC (77 aa)) constitute a chloroplast transit peptide. K95 contacts ADP-alpha-D-glucose. The segment at 585 to 607 (SGSEPGVEGEEIAPLAKENVATP) is disordered.

Belongs to the glycosyltransferase 1 family. Bacterial/plant glycogen synthase subfamily.

The protein localises to the plastid. It localises to the chloroplast. The protein resides in the amyloplast. It catalyses the reaction an NDP-alpha-D-glucose + [(1-&gt;4)-alpha-D-glucosyl](n) = [(1-&gt;4)-alpha-D-glucosyl](n+1) + a ribonucleoside 5'-diphosphate + H(+). It participates in glycan biosynthesis; starch biosynthesis. The polypeptide is Granule-bound starch synthase 1, chloroplastic/amyloplastic (WAXY) (Solanum tuberosum (Potato)).